Consider the following 178-residue polypeptide: MSRIADNPVSIPKGVEVTLSGDNDIKVKGAKGSLAFAIHPLIQVVQDGETLRFSAKSTDKRVNALRGTTRALINNMVQGVSQGFERRLQLVGVGYRAQLQGRKLVLSLGYSHPVEFTAPEGLTIEVPSPTEIIVKGYDKQQVGQAAANIRRFRPPEPYKGKGVRYADEVVVRKEAKKK.

This sequence belongs to the universal ribosomal protein uL6 family. As to quaternary structure, part of the 50S ribosomal subunit.

In terms of biological role, this protein binds to the 23S rRNA, and is important in its secondary structure. It is located near the subunit interface in the base of the L7/L12 stalk, and near the tRNA binding site of the peptidyltransferase center. The sequence is that of Large ribosomal subunit protein uL6 from Nitrosococcus oceani (strain ATCC 19707 / BCRC 17464 / JCM 30415 / NCIMB 11848 / C-107).